Consider the following 447-residue polypeptide: 26S proteasome non-ATPase regulatory subunit 12 (447 aa).

Residues 1-23 form a disordered region; sequence MTIGLEPAVSSKTKDKMEQDLSP. Residues 240-411 enclose the PCI domain; it reads NYIEIARCYL…GIATFTTTND (172 aa).

It belongs to the proteasome subunit p55 family.

Its function is as follows. Acts as a regulatory subunit of the 26S proteasome which is involved in the ATP-dependent degradation of ubiquitinated proteins. The polypeptide is 26S proteasome non-ATPase regulatory subunit 12 (psmD12) (Dictyostelium discoideum (Social amoeba)).